The following is a 470-amino-acid chain: Asparagine--tRNA ligase (470 aa).

Belongs to the class-II aminoacyl-tRNA synthetase family. As to quaternary structure, homodimer.

It is found in the cytoplasm. It carries out the reaction tRNA(Asn) + L-asparagine + ATP = L-asparaginyl-tRNA(Asn) + AMP + diphosphate + H(+). The sequence is that of Asparagine--tRNA ligase from Blochmanniella pennsylvanica (strain BPEN).